The primary structure comprises 391 residues: Lysophosphatidylinositol acyltransferase 10 (391 aa).

5 consecutive transmembrane segments (helical) span residues 10-30, 52-72, 97-119, 323-343, and 347-367; these read LLGWFFGLCILFSALFGNYII, AISYWMTIPMGLLEFLMGVRI, WMYMWCALYQINPWLITSNKISL, LTSLMFWTLVISFCSYHIFFV, and QLGFLYFFVISFYLSWRYGGI.

It belongs to the 1-acyl-sn-glycerol-3-phosphate acyltransferase family. Expressed in seam cells, vulval epithelial cells and the major epithelial syncytium hyp7, and in several head neurons including AIY interneurons.

It is found in the endoplasmic reticulum membrane. The enzyme catalyses a 2-acyl-sn-glycero-3-phospho-D-myo-inositol + an acyl-CoA = a 1,2-diacyl-sn-glycero-3-phospho-(1D-myo-inositol) + CoA. The catalysed reaction is a 2-acyl-sn-glycero-3-phospho-D-myo-inositol + octadecanoyl-CoA = 1-octadecanoyl-2-acyl-sn-glycero-3-phospho-1D-myo-inositol + CoA. It functions in the pathway phospholipid metabolism; phosphatidylinositol metabolism. Functionally, acyltransferase required for the fatty acid remodeling of phosphatidylinositol (1,2-diacyl-sn-glycero-3-phosphoinositol or PI). Mediates the conversion of lysophosphatidylinositol (2-acylglycerophosphatidylinositol or LPI) into PI (LPIAT activity). Has preference for saturated and mono-unsaturated fatty acids as acyl donors and sn-2-acyl lysoPI (2-acyl-sn-glycero-3-phospho-D-myo-inositol) as acyl acceptor. Contributes to the asymmetric cell division of epithelial cells. Asymmetric cell division is the fundamental mechanism by which multicellular organisms generate cell diversity. The polypeptide is Lysophosphatidylinositol acyltransferase 10 (Caenorhabditis elegans).